Here is a 267-residue protein sequence, read N- to C-terminus: Protein BMH1 (267 aa).

An N-acetylserine modification is found at serine 2. Lysine 76 is covalently cross-linked (Glycyl lysine isopeptide (Lys-Gly) (interchain with G-Cter in ubiquitin)). The residue at position 89 (serine 89) is a Phosphoserine. A disordered region spans residues 236–267 (DMSESGQAEDQQQQQQHQQQQPPAAAEGEAPK). Residues 243-267 (AEDQQQQQQHQQQQPPAAAEGEAPK) are compositionally biased toward low complexity.

This sequence belongs to the 14-3-3 family. Homodimer. Interacts with NTH1 (via N-terminus when phosphorylated by PKA); the interaction is direct and activates NTH1. Interacts with FIN1.

Its function is as follows. Involved in growth regulation. The chain is Protein BMH1 (BMH1) from Saccharomyces cerevisiae (strain ATCC 204508 / S288c) (Baker's yeast).